A 189-amino-acid chain; its full sequence is GTP cyclohydrolase 1 (189 aa).

Zn(2+)-binding residues include Cys76, His79, and Cys149.

It belongs to the GTP cyclohydrolase I family. In terms of assembly, toroid-shaped homodecamer, composed of two pentamers of five dimers.

It carries out the reaction GTP + H2O = 7,8-dihydroneopterin 3'-triphosphate + formate + H(+). It functions in the pathway cofactor biosynthesis; 7,8-dihydroneopterin triphosphate biosynthesis; 7,8-dihydroneopterin triphosphate from GTP: step 1/1. In Dehalococcoides mccartyi (strain ATCC BAA-2266 / KCTC 15142 / 195) (Dehalococcoides ethenogenes (strain 195)), this protein is GTP cyclohydrolase 1.